The following is a 122-amino-acid chain: Large ribosomal subunit protein uL14c (122 aa).

The protein belongs to the universal ribosomal protein uL14 family. Part of the 50S ribosomal subunit.

The protein resides in the plastid. The protein localises to the chloroplast. Binds to 23S rRNA. This is Large ribosomal subunit protein uL14c from Lemna minor (Common duckweed).